Here is a 728-residue protein sequence, read N- to C-terminus: Catalase-peroxidase 1 (728 aa).

The segment at residues 91–218 (WHSAGTYRTA…LAAVQMGLIY (128 aa)) is a cross-link (tryptophyl-tyrosyl-methioninium (Trp-Tyr) (with M-244)). Catalysis depends on H92, which acts as the Proton acceptor. Residues 218 to 244 (YVNPEGPDGNPDPVAAAHDIRETFARM) constitute a cross-link (tryptophyl-tyrosyl-methioninium (Tyr-Met) (with W-91)). H259 lines the heme b pocket.

Belongs to the peroxidase family. Peroxidase/catalase subfamily. As to quaternary structure, homodimer or homotetramer. Heme b is required as a cofactor. Post-translationally, formation of the three residue Trp-Tyr-Met cross-link is important for the catalase, but not the peroxidase activity of the enzyme.

It carries out the reaction H2O2 + AH2 = A + 2 H2O. The catalysed reaction is 2 H2O2 = O2 + 2 H2O. Its function is as follows. Bifunctional enzyme with both catalase and broad-spectrum peroxidase activity. The polypeptide is Catalase-peroxidase 1 (Burkholderia cenocepacia (strain HI2424)).